A 499-amino-acid chain; its full sequence is Endoglucanase (499 aa).

Positions 1–29 (MKRSISIFITCLLIAVLTMGGLLPSPASA) are cleaved as a signal peptide. Substrate is bound by residues histidine 65, 69-70 (WY), tyrosine 96, and histidine 131. The active-site Proton donor is glutamate 169. Substrate is bound at residue tyrosine 231. Glutamate 257 functions as the Nucleophile in the catalytic mechanism. Residues 263–264 (AS), tryptophan 291, and 296–298 (KQE) each bind substrate. Residues 330–340 (RGTKDSTKDVP) show a composition bias toward basic and acidic residues. A disordered region spans residues 330 to 353 (RGTKDSTKDVPETPAQDNPTQEKG). The CBM3 domain occupies 350–499 (QEKGVSVQYK…GKLIWGTEPN (150 aa)).

It belongs to the glycosyl hydrolase 5 (cellulase A) family.

It catalyses the reaction Endohydrolysis of (1-&gt;4)-beta-D-glucosidic linkages in cellulose, lichenin and cereal beta-D-glucans.. The sequence is that of Endoglucanase (bglC) from Bacillus subtilis.